A 241-amino-acid polypeptide reads, in one-letter code: Methylthioribulose-1-phosphate dehydratase (241 aa).

The segment covering 1 to 17 has biased composition (polar residues); sequence MAKQVENNNNDHLVQST. A disordered region spans residues 1–21; sequence MAKQVENNNNDHLVQSTDPEH. C100 contacts substrate. Residues H117 and H119 each coordinate Zn(2+). E146 functions as the Proton donor/acceptor in the catalytic mechanism. H202 contacts Zn(2+).

The protein belongs to the aldolase class II family. MtnB subfamily. Zn(2+) is required as a cofactor.

It is found in the cytoplasm. The enzyme catalyses 5-(methylsulfanyl)-D-ribulose 1-phosphate = 5-methylsulfanyl-2,3-dioxopentyl phosphate + H2O. The protein operates within amino-acid biosynthesis; L-methionine biosynthesis via salvage pathway; L-methionine from S-methyl-5-thio-alpha-D-ribose 1-phosphate: step 2/6. In terms of biological role, catalyzes the dehydration of methylthioribulose-1-phosphate (MTRu-1-P) into 2,3-diketo-5-methylthiopentyl-1-phosphate (DK-MTP-1-P). In Aspergillus flavus (strain ATCC 200026 / FGSC A1120 / IAM 13836 / NRRL 3357 / JCM 12722 / SRRC 167), this protein is Methylthioribulose-1-phosphate dehydratase.